The primary structure comprises 173 residues: RxLR effector protein PITG_10232 (173 aa).

Positions 1–24 (MRLGYLIVGCAVALLATTDGVVDA) are cleaved as a signal peptide. Positions 25 to 64 (SSKHKQLSTDVPRPADDISSERFLRSQDTPEDDGNPAHED) are disordered. Positions 37 to 49 (RPADDISSERFLR) are enriched in basic and acidic residues. The RxLR-dEER signature appears at 46 to 65 (RFLRSQDTPEDDGNPAHEDR).

It belongs to the RxLR effector family.

It localises to the secreted. It is found in the host nucleus. The protein localises to the host cytoplasm. Effector that leads to host programmed cell death. This Phytophthora infestans (strain T30-4) (Potato late blight agent) protein is RxLR effector protein PITG_10232.